The primary structure comprises 353 residues: uncharacterized protein (353 aa).

Positions 1–30 are cleaved as a signal peptide; sequence MHLRHLFSLRLRGSLLLGSLLVASSFSTQA.

This is an uncharacterized protein from Escherichia coli O157:H7.